The sequence spans 430 residues: Serine--tRNA ligase (430 aa).

Residue 237–239 coordinates L-serine; it reads TAE. Residue 268–270 participates in ATP binding; that stretch reads RSE. E291 provides a ligand contact to L-serine. Residue 355 to 358 coordinates ATP; it reads EISS. L-serine is bound at residue S391.

It belongs to the class-II aminoacyl-tRNA synthetase family. Type-1 seryl-tRNA synthetase subfamily. Homodimer. The tRNA molecule binds across the dimer.

The protein localises to the cytoplasm. It carries out the reaction tRNA(Ser) + L-serine + ATP = L-seryl-tRNA(Ser) + AMP + diphosphate + H(+). It catalyses the reaction tRNA(Sec) + L-serine + ATP = L-seryl-tRNA(Sec) + AMP + diphosphate + H(+). It functions in the pathway aminoacyl-tRNA biosynthesis; selenocysteinyl-tRNA(Sec) biosynthesis; L-seryl-tRNA(Sec) from L-serine and tRNA(Sec): step 1/1. In terms of biological role, catalyzes the attachment of serine to tRNA(Ser). Is also able to aminoacylate tRNA(Sec) with serine, to form the misacylated tRNA L-seryl-tRNA(Sec), which will be further converted into selenocysteinyl-tRNA(Sec). The protein is Serine--tRNA ligase of Shigella dysenteriae serotype 1 (strain Sd197).